The primary structure comprises 197 residues: Xanthine phosphoribosyltransferase (197 aa).

The xanthine site is built by leucine 20 and asparagine 27. 128–132 (ANGQA) contributes to the 5-phospho-alpha-D-ribose 1-diphosphate binding site. Position 156 (lysine 156) interacts with xanthine.

It belongs to the purine/pyrimidine phosphoribosyltransferase family. Xpt subfamily. As to quaternary structure, homodimer.

It is found in the cytoplasm. It catalyses the reaction XMP + diphosphate = xanthine + 5-phospho-alpha-D-ribose 1-diphosphate. The protein operates within purine metabolism; XMP biosynthesis via salvage pathway; XMP from xanthine: step 1/1. In terms of biological role, converts the preformed base xanthine, a product of nucleic acid breakdown, to xanthosine 5'-monophosphate (XMP), so it can be reused for RNA or DNA synthesis. The polypeptide is Xanthine phosphoribosyltransferase (Bacillus thuringiensis (strain Al Hakam)).